The chain runs to 555 residues: Xylulose kinase (555 aa).

The substrate site is built by histidine 88, arginine 158, aspartate 274, and asparagine 275. ATP-binding positions include tryptophan 357, 455-456, and asparagine 459; that span reads GA.

This sequence belongs to the FGGY kinase family.

Its subcellular location is the cytoplasm. It catalyses the reaction D-xylulose + ATP = D-xylulose 5-phosphate + ADP + H(+). This is Xylulose kinase from Schizosaccharomyces pombe (strain 972 / ATCC 24843) (Fission yeast).